A 156-amino-acid chain; its full sequence is tRNA (cytidine(34)-2'-O)-methyltransferase (156 aa).

Positions 102, 124, and 132 each coordinate S-adenosyl-L-methionine.

The protein belongs to the class IV-like SAM-binding methyltransferase superfamily. RNA methyltransferase TrmH family. TrmL subfamily. As to quaternary structure, homodimer.

It localises to the cytoplasm. It carries out the reaction cytidine(34) in tRNA + S-adenosyl-L-methionine = 2'-O-methylcytidine(34) in tRNA + S-adenosyl-L-homocysteine + H(+). The catalysed reaction is 5-carboxymethylaminomethyluridine(34) in tRNA(Leu) + S-adenosyl-L-methionine = 5-carboxymethylaminomethyl-2'-O-methyluridine(34) in tRNA(Leu) + S-adenosyl-L-homocysteine + H(+). In terms of biological role, methylates the ribose at the nucleotide 34 wobble position in the two leucyl isoacceptors tRNA(Leu)(CmAA) and tRNA(Leu)(cmnm5UmAA). Catalyzes the methyl transfer from S-adenosyl-L-methionine to the 2'-OH of the wobble nucleotide. The protein is tRNA (cytidine(34)-2'-O)-methyltransferase of Burkholderia pseudomallei (strain 1106a).